The primary structure comprises 1501 residues: RE1-silencing transcription factor A (1501 aa).

The C2H2-type 1 zinc finger occupies 158-180; the sequence is FRCKPCQYKAESEEEFVHHIKIH. A compositionally biased stretch (basic and acidic residues) spans 186 to 200; the sequence is VDNDSKKNPQGKEAD. Positions 186-209 are disordered; the sequence is VDNDSKKNPQGKEADSSIPEESDI. 7 consecutive C2H2-type zinc fingers follow at residues 214 to 236, 246 to 268, 274 to 296, 302 to 324, 330 to 353, 359 to 381, and 387 to 410; these read IQCDGCGYNTNRFDHYLAHLKHH, YKCTICTYSTVSEYHWKKHLRNH, YTCSQCSYFSDRKNNYIQHIRTH, YQCIICLYSSSQKTHLTRHMRTH, FKCEQCSYVASNQHEVTRHARQVH, LTCPHCDYKTADRSNFKKHVELH, and FLCPVCDYAASKKCNLQYHIKSRH. Disordered regions lie at residues 491–514, 569–612, 885–929, and 1040–1079; these read SSTQKKIKASEVRPEKIVDKSRKS, SFVK…SVAS, PTKV…VPGD, and VAAGDEPTSVQPLSREDPKSVQPIGEDQPTSVQPPGGDEQ. Basic and acidic residues-rich tracts occupy residues 498–512 and 594–605; these read KASEVRPEKIVDKSR and ITEKKEKGKQLD. The span at 1067 to 1079 shows a compositional bias: polar residues; that stretch reads QPTSVQPPGGDEQ. The segment at 1463-1485 adopts a C2H2-type 9 zinc-finger fold; that stretch reads FVCIFCDRTFRKEEEYTKHLRRH.

It is found in the nucleus. Its subcellular location is the cytoplasm. Transcriptional repressor which binds neuron-restrictive silencer element (NRSE) and represses neuronal gene transcription in non-neuronal cells. Plays a role in the early development of the nervous system and is required for proper patterning of the neuroectoderm during gastrulation. This involves the correct speciation of the neuroepithelial domain and adequate development of the non-neural ectoderm. The chain is RE1-silencing transcription factor A (rest-a) from Xenopus laevis (African clawed frog).